Consider the following 522-residue polypeptide: MGCCGSSLRVGSHAPEKPPRRARPPPPPPQPHHPRRPSFTLNAHQAAASSSAASAAPAPAFAEFSLAELREATGGFAAANIVSESGEKAPNLVYRGRLQGAGGGGRAIAVKKFGKLAWPDPKQFAEEARGVGKLRHRRMANLIGYCCDGDERLLVAEFMPNDTLAKHLFHWENKAIEWAMRLRVAYNIAEALEYCSNEERPLYHDLNAYRVLFDENGDPRLSCFGLMKNSRDGKSYSTNLAYTPPEYLRNGRVTLESVVFSFGTILIDLLSGKRIPPTLALDMIRSRSIQAIMETNLEGKYSIEEATTLVDLASKCLQYEPRDRPDIKKLVSILQPLQTKSEVPSYVMLGVPKPEEVPKAPPAPQHPLSPMGEACSRMDLTAIHQILVSTHYRDDEGTNELSFQEWTQQMRDMLDARKRGDFAFRDKNFKQAIDCYTQFVDVGTMVSPTVYARRSLCHLMCDQPDAALRDAMQAQCVYPDWPTAFYMQAVALSKLNMQSDSLDMLNEASQLEEKRQKSIKGP.

Residues 1 to 54 (MGCCGSSLRVGSHAPEKPPRRARPPPPPPQPHHPRRPSFTLNAHQAAASSSAAS) form a disordered region. A lipid anchor (N-myristoyl glycine) is attached at glycine 2. The 260-residue stretch at 79-338 (ANIVSESGEK…KLVSILQPLQ (260 aa)) folds into the Protein kinase domain. ATP contacts are provided by residues 85 to 93 (SGEKAPNLV) and lysine 111. The active-site Proton acceptor is the aspartate 205.

The protein belongs to the protein kinase superfamily. Ser/Thr protein kinase family.

It localises to the cell membrane. The catalysed reaction is L-seryl-[protein] + ATP = O-phospho-L-seryl-[protein] + ADP + H(+). The enzyme catalyses L-threonyl-[protein] + ATP = O-phospho-L-threonyl-[protein] + ADP + H(+). In terms of biological role, probable serine/threonine kinase that functions as a positive regulator of plant immunity. May be involved in the regulation of pattern-triggered immunity (PTI). Does not seem to be involved in responses to brassinosteroid (BR) signaling. The polypeptide is Serine/threonine-protein kinase BSK1-2 (Oryza sativa subsp. japonica (Rice)).